Reading from the N-terminus, the 960-residue chain is MEYAVTNMRLLSNMMYSASAISFPRVRLHCSIPTEPSCRRNPFRQSNQPVQVPSPKLACFDGVLTEAFQRLDVSENNSPVEAFAYVLELCGKRRAVSQGRQLHSRIFKTFPSFELDFLAGKLVFMYGKCGSLDDAEKVFDEMPDRTAFAWNTMIGAYVSNGEPASALALYWNMRVEGVPLGLSSFPALLKACAKLRDIRSGSELHSLLVKLGYHSTGFIVNALVSMYAKNDDLSAARRLFDGFQEKGDAVLWNSILSSYSTSGKSLETLELFREMHMTGPAPNSYTIVSALTACDGFSYAKLGKEIHASVLKSSTHSSELYVCNALIAMYTRCGKMPQAERILRQMNNADVVTWNSLIKGYVQNLMYKEALEFFSDMIAAGHKSDEVSMTSIIAASGRLSNLLAGMELHAYVIKHGWDSNLQVGNTLIDMYSKCNLTCYMGRAFLRMHDKDLISWTTVIAGYAQNDCHVEALELFRDVAKKRMEIDEMILGSILRASSVLKSMLIVKEIHCHILRKGLLDTVIQNELVDVYGKCRNMGYATRVFESIKGKDVVSWTSMISSSALNGNESEAVELFRRMVETGLSADSVALLCILSAAASLSALNKGREIHCYLLRKGFCLEGSIAVAVVDMYACCGDLQSAKAVFDRIERKGLLQYTSMINAYGMHGCGKAAVELFDKMRHENVSPDHISFLALLYACSHAGLLDEGRGFLKIMEHEYELEPWPEHYVCLVDMLGRANCVVEAFEFVKMMKTEPTAEVWCALLAACRSHSEKEIGEIAAQRLLELEPKNPGNLVLVSNVFAEQGRWNDVEKVRAKMKASGMEKHPGCSWIEMDGKVHKFTARDKSHPESKEIYEKLSEVTRKLEREVGYVADTKFVLHNVDEGEKVQMLHGHSERIAIAYGLLRTPDRACLRITKNLRVCRDCHTFCKLVSKLFRRDIVMRDANRFHHFESGLCSCGDSW.

Residues 1–64 (MEYAVTNMRL…PKLACFDGVL (64 aa)) constitute a chloroplast transit peptide. PPR repeat units lie at residues 79-109 (PVEA…IFKT), 115-145 (LDFL…MPDR), 146-180 (TAFA…GVPL), 181-215 (GLSS…GYHS), 216-246 (TGFI…FQEK), 248-282 (DAVL…GPAP), 283-317 (NSYT…STHS), 319-349 (ELYV…MNNA), 350-384 (DVVT…GHKS), 385-419 (DEVS…GWDS), 420-450 (NLQV…MHDK), 451-485 (DLIS…RMEI), 486-516 (DEMI…ILRK), 520-550 (DTVI…IKGK), 551-585 (DVVS…GLSA), 586-620 (DSVA…GFCL), 621-651 (EGSI…IERK), 652-686 (GLLQ…NVSP), 687-717 (DHIS…MEHE), and 723-753 (WPEH…MKTE). Residues 758–833 (VWCALLAACR…HPGCSWIEMD (76 aa)) are type E motif. The type E(+) motif stretch occupies residues 834–864 (GKVHKFTARDKSHPESKEIYEKLSEVTRKLE). The type DYW motif stretch occupies residues 865 to 960 (REVGYVADTK…SGLCSCGDSW (96 aa)).

Belongs to the PPR family. PCMP-H subfamily.

It is found in the plastid. It localises to the chloroplast. In terms of biological role, involved in RNA editing event in chloroplasts. Required for the editing of a single site in rps14 transcript. This is Pentatricopeptide repeat-containing protein At3g63370, chloroplastic (PCMP-H83) from Arabidopsis thaliana (Mouse-ear cress).